A 367-amino-acid chain; its full sequence is Peptide chain release factor 2 (367 aa).

N5-methylglutamine is present on Gln-254.

This sequence belongs to the prokaryotic/mitochondrial release factor family. In terms of processing, methylated by PrmC. Methylation increases the termination efficiency of RF2.

It localises to the cytoplasm. Functionally, peptide chain release factor 2 directs the termination of translation in response to the peptide chain termination codons UGA and UAA. The sequence is that of Peptide chain release factor 2 from Neisseria meningitidis serogroup B (strain ATCC BAA-335 / MC58).